A 213-amino-acid polypeptide reads, in one-letter code: tRNA (guanine-N(7)-)-methyltransferase (213 aa).

Residues glutamate 44, glutamate 69, aspartate 96, and aspartate 118 each contribute to the S-adenosyl-L-methionine site. The active site involves aspartate 118. Residues lysine 122, aspartate 154, and 192–195 (TEYE) contribute to the substrate site.

The protein belongs to the class I-like SAM-binding methyltransferase superfamily. TrmB family.

It catalyses the reaction guanosine(46) in tRNA + S-adenosyl-L-methionine = N(7)-methylguanosine(46) in tRNA + S-adenosyl-L-homocysteine. It functions in the pathway tRNA modification; N(7)-methylguanine-tRNA biosynthesis. Its function is as follows. Catalyzes the formation of N(7)-methylguanine at position 46 (m7G46) in tRNA. This Limosilactobacillus reuteri (strain DSM 20016) (Lactobacillus reuteri) protein is tRNA (guanine-N(7)-)-methyltransferase.